The chain runs to 500 residues: ATP synthase subunit beta (500 aa).

155 to 162 (GGAGVGKT) contacts ATP.

This sequence belongs to the ATPase alpha/beta chains family. F-type ATPases have 2 components, CF(1) - the catalytic core - and CF(0) - the membrane proton channel. CF(1) has five subunits: alpha(3), beta(3), gamma(1), delta(1), epsilon(1). CF(0) has three main subunits: a(1), b(2) and c(9-12). The alpha and beta chains form an alternating ring which encloses part of the gamma chain. CF(1) is attached to CF(0) by a central stalk formed by the gamma and epsilon chains, while a peripheral stalk is formed by the delta and b chains.

The protein localises to the cell inner membrane. It catalyses the reaction ATP + H2O + 4 H(+)(in) = ADP + phosphate + 5 H(+)(out). Functionally, produces ATP from ADP in the presence of a proton gradient across the membrane. The catalytic sites are hosted primarily by the beta subunits. The chain is ATP synthase subunit beta from Azobacteroides pseudotrichonymphae genomovar. CFP2.